Here is a 554-residue protein sequence, read N- to C-terminus: Eukaryotic translation initiation factor 3 subunit D-2 (554 aa).

The tract at residues 116–149 (RGNAAIGGGQGGAGGTGGAGVGNKYGKGRDMRRG) is disordered. Residues 120–140 (AIGGGQGGAGGTGGAGVGNKY) show a composition bias toward gly residues. Positions 291-305 (QFDLLTVNETALEPP) are RNA gate. Residues 532-554 (FDSDGNDDEETSDDRPFLKSLGN) form a disordered region.

This sequence belongs to the eIF-3 subunit D family. In terms of assembly, component of the eukaryotic translation initiation factor 3 (eIF-3) complex. The eIF-3 complex interacts with pix.

The protein resides in the cytoplasm. MRNA cap-binding component of the eukaryotic translation initiation factor 3 (eIF-3) complex, which is involved in protein synthesis of a specialized repertoire of mRNAs and, together with other initiation factors, stimulates binding of mRNA and methionyl-tRNAi to the 40S ribosome. The eIF-3 complex specifically targets and initiates translation of a subset of mRNAs involved in cell proliferation. In the eIF-3 complex, eif3d specifically recognizes and binds the 7-methylguanosine cap of a subset of mRNAs. The polypeptide is Eukaryotic translation initiation factor 3 subunit D-2 (Drosophila virilis (Fruit fly)).